A 142-amino-acid chain; its full sequence is uncharacterized protein (142 aa).

A Peptidase C39 domain is found at 18 to 137; that stretch reads QSSGYSCGPA…KIFTGNVLVV (120 aa).

This is an uncharacterized protein from Methanothermobacter marburgensis (strain ATCC BAA-927 / DSM 2133 / JCM 14651 / NBRC 100331 / OCM 82 / Marburg) (Methanobacterium thermoautotrophicum).